The sequence spans 559 residues: MTKFVFVTGGVVSSLGKGIASASLAAILESRGLKVTLIKLDPYINVDPGTMSPFQHGEVFVTDDGAETDLDLGHYERFIETRMKKTNNFTTGRIYQSVLEKERRGDYLGKTVQVIPHVTNEIQEYVKRGAGIGTGDAVDVAIVEIGGTVGDIESLPFLEAVRQMSLRMGPNNSAFVHLTYLPYIAAAGELKTKPTQHTVQKLREIGIQPDALLCRADRRIPDEERGKISLFTNVAEWGVISMWDVDTIYKVPRMLHEQGLDGLICDKLRLNTPPTSLKRWDQLVYETEHPQGEVTIAMVGKYVDLSDSYKSVNEALRHAGMKNHVRVKIEHVDSETIAPGDAAEKLAKYDAILVPGGFGARGVEGKICTARYAREQRVPYLGICLGMQVATIEYARHVAGLANANSTEFDAATPHPVIALITEWKDADGTIQTRSETSDLGGTMRLGAQSSDVASGTLAHEIYGNIVTERHRHRYEANVNYLDRLRKAGLVISALTQREQLTEIVELPREVHPWFIGVQFHPEFKSTPWDGHPLFNAFIKAAIDHQKSRQPTLPAAAAS.

The segment at 1-270 is amidoligase domain; it reads MTKFVFVTGG…DGLICDKLRL (270 aa). Position 13 (Ser13) interacts with CTP. Ser13 contacts UTP. ATP contacts are provided by residues 14-19 and Asp71; that span reads SLGKGI. Positions 71 and 144 each coordinate Mg(2+). CTP is bound by residues 151–153, 191–196, and Lys227; these read DIE and KTKPTQ. Residues 191 to 196 and Lys227 each bind UTP; that span reads KTKPTQ. A Glutamine amidotransferase type-1 domain is found at 295 to 548; the sequence is TIAMVGKYVD…IKAAIDHQKS (254 aa). Gly357 serves as a coordination point for L-glutamine. Catalysis depends on Cys384, which acts as the Nucleophile; for glutamine hydrolysis. L-glutamine-binding positions include 385 to 388, Glu408, and Arg474; that span reads LGMQ. Catalysis depends on residues His521 and Glu523.

Belongs to the CTP synthase family. In terms of assembly, homotetramer.

The catalysed reaction is UTP + L-glutamine + ATP + H2O = CTP + L-glutamate + ADP + phosphate + 2 H(+). It catalyses the reaction L-glutamine + H2O = L-glutamate + NH4(+). It carries out the reaction UTP + NH4(+) + ATP = CTP + ADP + phosphate + 2 H(+). It participates in pyrimidine metabolism; CTP biosynthesis via de novo pathway; CTP from UDP: step 2/2. Its activity is regulated as follows. Allosterically activated by GTP, when glutamine is the substrate; GTP has no effect on the reaction when ammonia is the substrate. The allosteric effector GTP functions by stabilizing the protein conformation that binds the tetrahedral intermediate(s) formed during glutamine hydrolysis. Inhibited by the product CTP, via allosteric rather than competitive inhibition. Its function is as follows. Catalyzes the ATP-dependent amination of UTP to CTP with either L-glutamine or ammonia as the source of nitrogen. Regulates intracellular CTP levels through interactions with the four ribonucleotide triphosphates. This chain is CTP synthase, found in Paracidovorax citrulli (strain AAC00-1) (Acidovorax citrulli).